The chain runs to 213 residues: Ras-related protein Rab-4A (213 aa).

9 residues coordinate GTP: Gly-18, Thr-19, Gly-20, Lys-21, Ser-22, Cys-23, Ser-37, His-39, and Thr-40. Mg(2+) is bound at residue Ser-22. The Switch 1 signature appears at 39–44; that stretch reads HTIGVE. The Mg(2+) site is built by Thr-40 and Asp-63. The Switch 2 signature appears at 65–74; the sequence is AGQERFRSVT. 6 residues coordinate GTP: Gly-66, Asn-121, Lys-122, Asp-124, Ala-152, and Leu-153. S-geranylgeranyl cysteine attachment occurs at residues Cys-211 and Cys-213. The residue at position 213 (Cys-213) is a Cysteine methyl ester.

It belongs to the small GTPase superfamily. Rab family. Mg(2+) serves as cofactor.

The protein localises to the membrane. Its subcellular location is the cytoplasm. It is found in the early endosome membrane. It localises to the recycling endosome membrane. It catalyses the reaction GTP + H2O = GDP + phosphate + H(+). With respect to regulation, regulated by guanine nucleotide exchange factors (GEFs) which promote the exchange of bound GDP for free GTP. Regulated by GTPase activating proteins (GAPs) which increase the GTP hydrolysis activity. Inhibited by GDP dissociation inhibitors (GDIs). In terms of biological role, the small GTPases Rab are key regulators of intracellular membrane trafficking, from the formation of transport vesicles to their fusion with membranes. Rabs cycle between an inactive GDP-bound form and an active GTP-bound form that is able to recruit to membranes different sets of downstream effectors directly responsible for vesicle formation, movement, tethering and fusion. RAB4A is involved in protein transport. Also plays a role in vesicular traffic. Mediates VEGFR2 endosomal trafficking to enhance VEGFR2 signaling. Acts as a regulator of platelet alpha-granule release during activation and aggregation of platelets. This chain is Ras-related protein Rab-4A (rab4a), found in Danio rerio (Zebrafish).